Consider the following 199-residue polypeptide: dITP/XTP pyrophosphatase (199 aa).

A substrate-binding site is contributed by 8 to 13; the sequence is SGNAGK. The active-site Proton acceptor is the Asp-69. Asp-69 is a binding site for Mg(2+). Substrate contacts are provided by residues Ser-70, 154 to 157, Lys-177, and 182 to 183; these read FGYN and HR.

The protein belongs to the HAM1 NTPase family. In terms of assembly, homodimer. It depends on Mg(2+) as a cofactor.

The catalysed reaction is XTP + H2O = XMP + diphosphate + H(+). It catalyses the reaction dITP + H2O = dIMP + diphosphate + H(+). The enzyme catalyses ITP + H2O = IMP + diphosphate + H(+). In terms of biological role, pyrophosphatase that catalyzes the hydrolysis of nucleoside triphosphates to their monophosphate derivatives, with a high preference for the non-canonical purine nucleotides XTP (xanthosine triphosphate), dITP (deoxyinosine triphosphate) and ITP. Seems to function as a house-cleaning enzyme that removes non-canonical purine nucleotides from the nucleotide pool, thus preventing their incorporation into DNA/RNA and avoiding chromosomal lesions. In Xanthomonas oryzae pv. oryzae (strain KACC10331 / KXO85), this protein is dITP/XTP pyrophosphatase.